Reading from the N-terminus, the 212-residue chain is Pyridoxine/pyridoxamine 5'-phosphate oxidase (212 aa).

Residues 59-64, 74-75, Lys81, and Gln103 contribute to the FMN site; these read RMVLMK and YS. Residue Lys64 coordinates substrate. Positions 121 and 125 each coordinate substrate. FMN-binding positions include 138–139 and Trp183; that span reads QS. Residue 189–191 coordinates substrate; that stretch reads RLH. Residue Arg193 coordinates FMN.

This sequence belongs to the pyridoxamine 5'-phosphate oxidase family. Homodimer. Requires FMN as cofactor.

The catalysed reaction is pyridoxamine 5'-phosphate + O2 + H2O = pyridoxal 5'-phosphate + H2O2 + NH4(+). The enzyme catalyses pyridoxine 5'-phosphate + O2 = pyridoxal 5'-phosphate + H2O2. Its pathway is cofactor metabolism; pyridoxal 5'-phosphate salvage; pyridoxal 5'-phosphate from pyridoxamine 5'-phosphate: step 1/1. The protein operates within cofactor metabolism; pyridoxal 5'-phosphate salvage; pyridoxal 5'-phosphate from pyridoxine 5'-phosphate: step 1/1. Catalyzes the oxidation of either pyridoxine 5'-phosphate (PNP) or pyridoxamine 5'-phosphate (PMP) into pyridoxal 5'-phosphate (PLP). In Rhodopseudomonas palustris (strain TIE-1), this protein is Pyridoxine/pyridoxamine 5'-phosphate oxidase.